The following is a 371-amino-acid chain: tRNA (guanine(26)-N(2))-dimethyltransferase (371 aa).

One can recognise a Trm1 methyltransferase domain in the interval 4–368; the sequence is IEVTEGRTTF…APLDAIAAAL (365 aa). Residues Arg41, Arg66, Asp82, Asp108, and Ala109 each coordinate S-adenosyl-L-methionine. Zn(2+)-binding residues include Cys237, Cys240, Cys256, and Cys259.

This sequence belongs to the class I-like SAM-binding methyltransferase superfamily. Trm1 family.

It carries out the reaction guanosine(26) in tRNA + 2 S-adenosyl-L-methionine = N(2)-dimethylguanosine(26) in tRNA + 2 S-adenosyl-L-homocysteine + 2 H(+). Dimethylates a single guanine residue at position 26 of a number of tRNAs using S-adenosyl-L-methionine as donor of the methyl groups. The chain is tRNA (guanine(26)-N(2))-dimethyltransferase from Methanosphaerula palustris (strain ATCC BAA-1556 / DSM 19958 / E1-9c).